A 347-amino-acid polypeptide reads, in one-letter code: D-alanine--D-alanine ligase (347 aa).

The 210-residue stretch at 133–342 (KQAFAQASLP…FPDLVHRLIQ (210 aa)) folds into the ATP-grasp domain. Residue 169-224 (ETELGYPCFVKPANLGSSVGIAKVRDRAELEAALDQAAALDRRLIIEAAIDNPREV) coordinates ATP. Mg(2+) is bound by residues Asp-296, Glu-309, and Asn-311.

Belongs to the D-alanine--D-alanine ligase family. The cofactor is Mg(2+). Mn(2+) is required as a cofactor.

Its subcellular location is the cytoplasm. The enzyme catalyses 2 D-alanine + ATP = D-alanyl-D-alanine + ADP + phosphate + H(+). It functions in the pathway cell wall biogenesis; peptidoglycan biosynthesis. Functionally, cell wall formation. The sequence is that of D-alanine--D-alanine ligase from Synechococcus elongatus (strain ATCC 33912 / PCC 7942 / FACHB-805) (Anacystis nidulans R2).